A 438-amino-acid chain; its full sequence is Mannan endo-1,4-beta-mannosidase F (438 aa).

The first 17 residues, 1 to 17, serve as a signal peptide directing secretion; that stretch reads MHPLPSVALLSAIGAVA. The CBM1 domain occupies 19–54; sequence QVGPWGQCGGRSYTGETSCVSGWSCVLFNEWYSQCQ. The interval 60-96 is ser-rich linker; the sequence is STSSVSATAAPSSTSSSKESVPSATTSKKPVPTGSSS. The span at 61 to 86 shows a compositional bias: low complexity; it reads TSSVSATAAPSSTSSSKESVPSATTS. The disordered stretch occupies residues 61–92; it reads TSSVSATAAPSSTSSSKESVPSATTSKKPVPT. Positions 97–438 are catalytic; the sequence is FVKADGLKFN…CGVADHLSTL (342 aa). Trp-149 and Asn-263 together coordinate substrate. The Proton donor role is filled by Glu-264. Residue Asn-277 is glycosylated (N-linked (GlcNAc...) asparagine). Tyr-339 is a binding site for substrate. Residue Glu-373 is the Nucleophile of the active site. A substrate-binding site is contributed by Trp-402.

It belongs to the glycosyl hydrolase 5 (cellulase A) family.

It localises to the secreted. It carries out the reaction Random hydrolysis of (1-&gt;4)-beta-D-mannosidic linkages in mannans, galactomannans and glucomannans.. Endo-1,4-mannanase, a crucial enzyme for depolymerization of seed galactomannans and wood galactoglucomannans. The chain is Mannan endo-1,4-beta-mannosidase F (manF) from Aspergillus fumigatus (strain ATCC MYA-4609 / CBS 101355 / FGSC A1100 / Af293) (Neosartorya fumigata).